Here is a 576-residue protein sequence, read N- to C-terminus: Insulin-like growth factor 2 mRNA-binding protein 1 (576 aa).

RRM domains are found at residues 2–75 (NKLY…HSVP) and 81–156 (RKIQ…YIPD). A disordered region spans residues 158–189 (QSVQGPENGRRGGFGARGAPRQGSPVTAGAPV). KH domains follow at residues 195–260 (DIPL…CKMI) and 276–343 (EVPL…EQEI). Phosphotyrosine; by SRC is present on Tyr396. KH domains follow at residues 404-469 (QETV…QGRI) and 486-552 (KLET…QRKI).

This sequence belongs to the RRM IMP/VICKZ family. As to quaternary structure, can form homooligomers and heterooligomers with IGF2BP1 and IGF2BP3 in an RNA-dependent manner. Associates with the cytoskeleton, predominantly with actin filament bundles and occasionally with microtubules. In a heterologous system, interacts with ELAVL1, DHX9 and HNRNPU. Phosphorylated by SRC at Tyr-396. This residue is involved in ACTB mRNA binding, its phosphorylation impairs association with ACTB mRNA and hence abolishes translational repression. Phosphorylation occurs in close proximity to filopodia and in the growth cones of differentiated neuroglioblastoma cells. As to expression, expressed in neurons and embryonic fibroblasts (at protein level).

The protein localises to the nucleus. The protein resides in the cytoplasm. It localises to the perinuclear region. It is found in the P-body. Its subcellular location is the stress granule. The protein localises to the cell projection. The protein resides in the growth cone. It localises to the filopodium. It is found in the lamellipodium. In terms of biological role, RNA-binding factor that recruits target transcripts to cytoplasmic protein-RNA complexes (mRNPs). This transcript 'caging' into mRNPs allows mRNA transport and transient storage. It also modulates the rate and location at which target transcripts encounter the translational apparatus and shields them from endonuclease attacks or microRNA-mediated degradation. Preferentially binds to N6-methyladenosine (m6A)-containing mRNAs and increases their stability. Plays a direct role in the transport and translation of transcripts required for axonal regeneration in adult sensory neurons. Regulates localized beta-actin/ACTB mRNA translation in polarized cells, a crucial process for cell migration and neurite outgrowth. Co-transcriptionally associates with the ACTB mRNA in the nucleus. This binding involves by a conserved 54-nucleotide element in the ACTB mRNA 3'-UTR, known as the 'zipcode'. The ribonucleoparticle (RNP) thus formed is exported to the cytoplasm, binds to a motor protein and is transported along the cytoskeleton to the cell periphery. During transport, IGF2BP1 prevents beta-actin mRNA from being translated into protein. When the RNP complex reaches its destination near the plasma membrane, IGF2BP1 is phosphorylated by SRC. This releases the mRNA, allowing ribosomal 40S and 60S subunits to assemble and initiate ACTB protein synthesis. The monomeric ACTB protein then assembles into the subcortical actin cytoskeleton, which pushes the leading edge onwards. Binds MYC mRNA. Binding to MYC mRNA is enhanced by m6A-modification of the CRD. Promotes the directed movement of cells by fine-tuning intracellular signaling networks. Binds to MAPK4 3'-UTR and inhibits its translation. Interacts with PTEN transcript open reading frame (ORF) and prevents mRNA decay. This combined action on MAPK4 (down-regulation) and PTEN (up-regulation) antagonizes HSPB1 phosphorylation, consequently it prevents G-actin sequestration by phosphorylated HSPB1, allowing F-actin polymerization. Hence enhances the velocity of cell migration and stimulates directed cell migration by PTEN-modulated polarization. The chain is Insulin-like growth factor 2 mRNA-binding protein 1 (IGF2BP1) from Gallus gallus (Chicken).